A 252-amino-acid chain; its full sequence is Trans-aconitate 2-methyltransferase (252 aa).

It belongs to the methyltransferase superfamily. Tam family.

It is found in the cytoplasm. The catalysed reaction is trans-aconitate + S-adenosyl-L-methionine = (E)-3-(methoxycarbonyl)pent-2-enedioate + S-adenosyl-L-homocysteine. Its function is as follows. Catalyzes the S-adenosylmethionine monomethyl esterification of trans-aconitate. This is Trans-aconitate 2-methyltransferase from Shigella flexneri serotype 5b (strain 8401).